The chain runs to 1410 residues: DNA-directed RNA polymerase subunit beta' (1410 aa).

Positions 70, 72, 85, and 88 each coordinate Zn(2+). Mg(2+) is bound by residues Asp-460, Asp-462, and Asp-464. Zn(2+) contacts are provided by Cys-814, Cys-888, Cys-895, and Cys-898.

It belongs to the RNA polymerase beta' chain family. The RNAP catalytic core consists of 2 alpha, 1 beta, 1 beta' and 1 omega subunit. When a sigma factor is associated with the core the holoenzyme is formed, which can initiate transcription. Requires Mg(2+) as cofactor. Zn(2+) serves as cofactor.

The enzyme catalyses RNA(n) + a ribonucleoside 5'-triphosphate = RNA(n+1) + diphosphate. In terms of biological role, DNA-dependent RNA polymerase catalyzes the transcription of DNA into RNA using the four ribonucleoside triphosphates as substrates. This Shewanella denitrificans (strain OS217 / ATCC BAA-1090 / DSM 15013) protein is DNA-directed RNA polymerase subunit beta'.